We begin with the raw amino-acid sequence, 166 residues long: NAD(P)H-quinone oxidoreductase subunit I, chloroplastic (166 aa).

2 4Fe-4S ferredoxin-type domains span residues 55-84 (GRIH…VDWK) and 95-124 (LNYS…MTEE). Residues cysteine 64, cysteine 67, cysteine 70, cysteine 74, cysteine 104, cysteine 107, cysteine 110, and cysteine 114 each coordinate [4Fe-4S] cluster.

Belongs to the complex I 23 kDa subunit family. As to quaternary structure, NDH is composed of at least 16 different subunits, 5 of which are encoded in the nucleus. [4Fe-4S] cluster serves as cofactor.

The protein resides in the plastid. The protein localises to the chloroplast thylakoid membrane. It carries out the reaction a plastoquinone + NADH + (n+1) H(+)(in) = a plastoquinol + NAD(+) + n H(+)(out). The enzyme catalyses a plastoquinone + NADPH + (n+1) H(+)(in) = a plastoquinol + NADP(+) + n H(+)(out). In terms of biological role, NDH shuttles electrons from NAD(P)H:plastoquinone, via FMN and iron-sulfur (Fe-S) centers, to quinones in the photosynthetic chain and possibly in a chloroplast respiratory chain. The immediate electron acceptor for the enzyme in this species is believed to be plastoquinone. Couples the redox reaction to proton translocation, and thus conserves the redox energy in a proton gradient. This Steiractinia sodiroi protein is NAD(P)H-quinone oxidoreductase subunit I, chloroplastic.